The primary structure comprises 234 residues: Protein CIST1 (234 aa).

Positions 1–24 are cleaved as a signal peptide; that stretch reads MACPQLPPLLLLVLVVLLKAGVNY. Residues 25–180 are Extracellular-facing; sequence NTPFTDIVTS…GPRELHRNPS (156 aa). Polar residues predominate over residues 41–121; sequence SPVSSLISSP…THPSSGSPSA (81 aa). The tract at residues 41–174 is disordered; the sequence is SPVSSLISSP…PAPGDTGPRE (134 aa). The segment covering 122 to 140 has biased composition (low complexity); the sequence is ELTPSSHSTLPSSESLTPH. Over residues 141–159 the composition is skewed to polar residues; the sequence is WSPTSHSPGTEPLTSTDQT. Residues 181 to 201 traverse the membrane as a helical segment; sequence VVVVVCLLVSLLLIGSVVMAV. Residues 202–234 lie on the Cytoplasmic side of the membrane; it reads RFCHRNESKFENLDEVSMGSVNDRLSFAHHLQE.

The protein localises to the membrane. The protein is Protein CIST1 of Homo sapiens (Human).